The sequence spans 329 residues: Solute carrier family 35 member B1 (329 aa).

8 helical membrane-spanning segments follow: residues A21–I41, T60–F80, W91–L111, Y142–Y162, V175–V195, T220–T240, I250–Y270, and V292–L312. The Di-lysine motif motif lies at K325–H329.

The protein belongs to the nucleotide-sugar transporter family. SLC35B subfamily.

It is found in the endoplasmic reticulum membrane. Functionally, probable sugar transporter. The protein is Solute carrier family 35 member B1 (slc35b1) of Danio rerio (Zebrafish).